The chain runs to 86 residues: MKTLPLTLVVVTIVCLDLGYTLTCLNCPEMFCGKFQICRNGEKICFKKLHQRRPFSLRYIRGCAATCPGTKPRDMVECCSTDRCNR.

An N-terminal signal peptide occupies residues 1–21 (MKTLPLTLVVVTIVCLDLGYT). Disulfide bonds link Cys24–Cys45, Cys27–Cys32, Cys38–Cys63, Cys67–Cys78, and Cys79–Cys84.

It belongs to the three-finger toxin family. Ancestral subfamily. Orphan group II sub-subfamily. Expressed by the venom gland.

It is found in the secreted. Its function is as follows. Binds with low affinity to muscular (alpha-1-beta-1-delta-epsilon/CHRNA1-CHRNB1-CHRND-CHRNE) and very low affinity to neuronal (alpha-7/CHRNA7) nicotinic acetylcholine receptor (nAChR). This is Probable weak neurotoxin NNAM2I from Naja atra (Chinese cobra).